The sequence spans 316 residues: Aspartate carbamoyltransferase catalytic subunit (316 aa).

Residues Arg66 and Thr67 each contribute to the carbamoyl phosphate site. Lys94 contributes to the L-aspartate binding site. Residues Arg116, His146, and Gln149 each coordinate carbamoyl phosphate. Residues Arg180 and Arg235 each contribute to the L-aspartate site. Residues Gly276 and Pro277 each coordinate carbamoyl phosphate.

The protein belongs to the aspartate/ornithine carbamoyltransferase superfamily. ATCase family. Heterododecamer (2C3:3R2) of six catalytic PyrB chains organized as two trimers (C3), and six regulatory PyrI chains organized as three dimers (R2).

The catalysed reaction is carbamoyl phosphate + L-aspartate = N-carbamoyl-L-aspartate + phosphate + H(+). The protein operates within pyrimidine metabolism; UMP biosynthesis via de novo pathway; (S)-dihydroorotate from bicarbonate: step 2/3. Functionally, catalyzes the condensation of carbamoyl phosphate and aspartate to form carbamoyl aspartate and inorganic phosphate, the committed step in the de novo pyrimidine nucleotide biosynthesis pathway. This chain is Aspartate carbamoyltransferase catalytic subunit, found in Stenotrophomonas maltophilia (strain K279a).